Here is a 224-residue protein sequence, read N- to C-terminus: Ribonuclease 3 (224 aa).

In terms of domain architecture, RNase III spans 5–127 (LERLCRRLNY…ILAAIYLDGG (123 aa)). Residue glutamate 40 coordinates Mg(2+). Residue aspartate 44 is part of the active site. Residues aspartate 113 and glutamate 116 each contribute to the Mg(2+) site. Glutamate 116 is an active-site residue. Residues 154–224 (DAKTQLQEFL…AKAMLEQLQG (71 aa)) enclose the DRBM domain.

This sequence belongs to the ribonuclease III family. As to quaternary structure, homodimer. Requires Mg(2+) as cofactor.

It localises to the cytoplasm. It catalyses the reaction Endonucleolytic cleavage to 5'-phosphomonoester.. In terms of biological role, digests double-stranded RNA. Involved in the processing of primary rRNA transcript to yield the immediate precursors to the large and small rRNAs (23S and 16S). Processes some mRNAs, and tRNAs when they are encoded in the rRNA operon. Processes pre-crRNA and tracrRNA of type II CRISPR loci if present in the organism. The polypeptide is Ribonuclease 3 (Legionella pneumophila (strain Lens)).